The sequence spans 304 residues: Quinolinate synthase (304 aa).

His23 and Ser40 together coordinate iminosuccinate. Cys85 contributes to the [4Fe-4S] cluster binding site. Iminosuccinate is bound by residues 111–113 (YVN) and Ser128. Cys171 contacts [4Fe-4S] cluster. Residues 197 to 199 (HPE) and Thr214 contribute to the iminosuccinate site. Cys259 provides a ligand contact to [4Fe-4S] cluster.

It belongs to the quinolinate synthase family. Type 2 subfamily. The cofactor is [4Fe-4S] cluster.

Its subcellular location is the cytoplasm. It carries out the reaction iminosuccinate + dihydroxyacetone phosphate = quinolinate + phosphate + 2 H2O + H(+). It functions in the pathway cofactor biosynthesis; NAD(+) biosynthesis; quinolinate from iminoaspartate: step 1/1. Functionally, catalyzes the condensation of iminoaspartate with dihydroxyacetone phosphate to form quinolinate. The protein is Quinolinate synthase of Pelobacter propionicus (strain DSM 2379 / NBRC 103807 / OttBd1).